The sequence spans 513 residues: MKRDLVLVIDFGGQYNQLIARRVRECNVYCEVHPYNLSVDEIKQMNPKGIIFTGGPNSVYGENSPLCDKAIFELGVPIFGICYGSQLMSHMLGGKVATAPVSEYGKTKVDVNIESKLFEGVSSSTICWMSHTDYIEKAPEGFKVIGKTPVCPVAAMECEDKNLYAVQFHPEVMHTEEGTKMLSNFVYNICGCTGDWKMDSFVEKTIEEVRQKVGNGKVLCALSGGVDSSVAAVLLSRAVGKQLTCVFVDHGLLRKNEGDEVEEIFGPNGQYDLNFIRVNAQERFYEKLAGIEEPEQKRKIIGEEFIRVFEEEAKKIGTVDYLVQGTIYPDVIESGLGKSAVIKSHHNVGGLPDYVDFKEIIEPLRLLFKDEVRKAGLELGIPEKLVFRQPFPGPGLGIRIIGEVTAEKVKIVQDADAIYREEIANAGIDKEIGQYFAALTNMRSVGVMGDERTYDYAIALRAVTTSDFMTAESADLPWEVLGKVTTRIVNEVKGVNRVMYDCTGKPPATIEFE.

In terms of domain architecture, Glutamine amidotransferase type-1 spans Leu5–Asp195. Catalysis depends on Cys82, which acts as the Nucleophile. Catalysis depends on residues His169 and Glu171. Residues Trp196–Arg388 enclose the GMPS ATP-PPase domain. Ser223–Ser229 is an ATP binding site.

Homodimer.

It carries out the reaction XMP + L-glutamine + ATP + H2O = GMP + L-glutamate + AMP + diphosphate + 2 H(+). The protein operates within purine metabolism; GMP biosynthesis; GMP from XMP (L-Gln route): step 1/1. In terms of biological role, catalyzes the synthesis of GMP from XMP. The protein is GMP synthase [glutamine-hydrolyzing] of Clostridium botulinum (strain Alaska E43 / Type E3).